Consider the following 177-residue polypeptide: Putative pre-16S rRNA nuclease (177 aa).

The interval 1–20 (MVATQQGPDRPGIDDPGRGR) is disordered.

This sequence belongs to the YqgF nuclease family.

The protein resides in the cytoplasm. In terms of biological role, could be a nuclease involved in processing of the 5'-end of pre-16S rRNA. This Rhodococcus erythropolis (strain PR4 / NBRC 100887) protein is Putative pre-16S rRNA nuclease.